The primary structure comprises 289 residues: MVVTLDGEILQPGMPLLHADDLAAVRGDGVFETLLVRDGRACLVEAHLQRLTQSARLMDLPEPDLPRWRRAVEVATQRWVASTADEGALRLIYSRGREGGSAPTAYVMVSPVPARVIGARRDGVSAITLDRGLPADGGDAMPWLIASAKTLSYAVNMAVLRHAARQGAGDVIFVSTDGYVLEGPRSTVVIATDGDQGGGNPCLLTPPPWYPILRGTTQQALFEVARAKGYDCDYRALRVADLFDSQGIWLVSSMTLAARVHTLDGRRLPRTPIAEVFAELVDAAIVSDR.

R50 contacts pyridoxal 5'-phosphate. K149 is modified (N6-(pyridoxal phosphate)lysine). Residues Y153, T216, and T217 each contribute to the pyridoxal 5'-phosphate site. Position 252 (S252) interacts with 2-oxoglutarate. Residue S253 coordinates pyridoxal 5'-phosphate. Residues M254 and T255 each coordinate 2-oxoglutarate.

It belongs to the class-IV pyridoxal-phosphate-dependent aminotransferase family. Homodimer. Pyridoxal 5'-phosphate is required as a cofactor.

The enzyme catalyses 4-amino-4-deoxychorismate = 4-aminobenzoate + pyruvate + H(+). It catalyses the reaction D-alanine + 2-oxoglutarate = D-glutamate + pyruvate. It functions in the pathway cofactor biosynthesis; tetrahydrofolate biosynthesis; 4-aminobenzoate from chorismate: step 2/2. The protein operates within cell wall biogenesis; peptidoglycan biosynthesis. In terms of biological role, bifunctional enzyme that catalyzes two enzymatic reactions in biochemically unrelated pathways: acts as an aminodeoxychorismate (ADC) lyase (ADCL) in folate biosynthesis, converting 4-amino-4-deoxychorismate (ADC) to 4-aminobenzoate (PABA), and as a D-amino acid transaminase (DAAT) in peptidoglycan (PG) biosynthesis. DAAT activity is strictly restricted to D-alanine and D-glutamate. May function as a metabolic toggle that alternates between ADCL and DAAT activity, prioritizing the former over the latter in response to substrate accumulation. Bifunctionality of this enzyme provides a failsafe mechanism for a metabolic coupling between nucleic acid and cell wall biosynthesis that appears to ensure prioritization of PABA production over D-alanine/D-glutamate biosynthesis. This Mycobacterium tuberculosis (strain ATCC 25618 / H37Rv) protein is Bifunctional aminodeoxychorismate lyase / D-amino acid transaminase.